Reading from the N-terminus, the 122-residue chain is Cupin 2 conserved barrel domain-containing protein (122 aa).

The cupin 2 conserved barrel stretch occupies residues proline 55–tryptophan 119. Zn(2+) is bound by residues aspartate 63, histidine 65, glutamate 69, and histidine 103.

It depends on Zn(2+) as a cofactor.

It carries out the reaction N(6)-hydroxy-L-lysine + L-glutamate + ATP = 1-L-glutamo-2-N(6-)L-lysinohydrazine + AMP + diphosphate + 2 H(+). With respect to regulation, inhibited by 1,10-phenanthroline (OP). In terms of biological role, catalyzes hydrazine (N-N) bond formation from an unstable ester intermediate, the product of the ATP-dependent condensation of L-N(6)-OH-lysine and L-glutamine substrates by a methionyl-tRNA synthase-like protein. The protein is Cupin 2 conserved barrel domain-containing protein of Rhodococcus jostii (strain RHA1).